The chain runs to 543 residues: Cytochrome P450 2U1 (543 aa).

A run of 4 helical transmembrane segments spans residues 32-52 (PTGG…SWLW), 58-78 (GIPP…VLLP), 261-281 (VCLN…YLPF), and 342-362 (LFYI…NSLL). Position 490 (cysteine 490) interacts with heme. Residues 495 to 515 (LAKMELFLMFVSLMQSFTFVL) traverse the membrane as a helical segment.

It belongs to the cytochrome P450 family. The cofactor is heme.

The protein resides in the endoplasmic reticulum membrane. It is found in the microsome membrane. It localises to the mitochondrion inner membrane. The enzyme catalyses an omega-methyl-long-chain fatty acid + reduced [NADPH--hemoprotein reductase] + O2 = an omega-hydroxy-long-chain fatty acid + oxidized [NADPH--hemoprotein reductase] + H2O + H(+). It catalyses the reaction (5Z,8Z,11Z,14Z)-eicosatetraenoate + reduced [NADPH--hemoprotein reductase] + O2 = 19-hydroxy-(5Z,8Z,11Z,14Z)-eicosatetraenoate + oxidized [NADPH--hemoprotein reductase] + H2O + H(+). It carries out the reaction (5Z,8Z,11Z,14Z)-eicosatetraenoate + reduced [NADPH--hemoprotein reductase] + O2 = 20-hydroxy-(5Z,8Z,11Z,14Z)-eicosatetraenoate + oxidized [NADPH--hemoprotein reductase] + H2O + H(+). The catalysed reaction is N-[(5Z,8Z,11Z,14Z)-eicosatetraenoyl]-serotonin + reduced [NADPH--hemoprotein reductase] + O2 = 2-oxo-N-[(5Z,8Z,11Z,14Z)-eicosatetraenoyl]-serotonin + oxidized [NADPH--hemoprotein reductase] + H2O + H(+). Its function is as follows. A cytochrome P450 monooxygenase involved in the metabolism of arachidonic acid and its conjugates. Mechanistically, uses molecular oxygen inserting one oxygen atom into a substrate, and reducing the second into a water molecule, with two electrons provided by NADPH via cytochrome P450 reductase (CPR; NADPH-ferrihemoprotein reductase). Acts as an omega and omega-1 hydroxylase for arachidonic acid and possibly for other long chain fatty acids. May modulate the arachidonic acid signaling pathway and play a role in other fatty acid signaling processes. May down-regulate the biological activities of N-arachidonoyl-serotonin, an endocannabinoid that has anti-nociceptive effects through inhibition of fatty acid amide hydrolase FAAH, TRPV1 receptor and T-type calcium channels. Catalyzes C-2 oxidation of the indole ring of N-arachidonoyl-serotonin forming a less active product 2-oxo-N-arachidonoyl-serotonin. This is Cytochrome P450 2U1 (CYP2U1) from Bos taurus (Bovine).